A 280-amino-acid polypeptide reads, in one-letter code: MTISVSVRQVVGPEDAARRNTQGLRDGFVIEALFQPGRANLTYSHLDRMIVGGVVPAADRLVIDRVAETGTQRFLDRREAAIINIGGSGTVSVGDKDHVLGFQEALYVGMGGGALGFASDDANAPALFYVLSAPAHRSCPTVHITRDMAKKLSLGSAEESNARTINQYVHPDVCESCQLLVGLTMFEPGSVWNTMPAHVHDRRMEVYLYFGMQEATRIFHFMGEPGETRHVVLKNHEAVLSPGWSIHSGAGTGRYAFIWAMAGDNMSFTDMDKVPMEALR.

Residues His-198, His-200, Glu-205, and His-247 each coordinate Zn(2+).

The protein belongs to the KduI family. Requires Zn(2+) as cofactor.

The enzyme catalyses 5-dehydro-4-deoxy-D-glucuronate = 3-deoxy-D-glycero-2,5-hexodiulosonate. The protein operates within glycan metabolism; pectin degradation; 2-dehydro-3-deoxy-D-gluconate from pectin: step 4/5. Functionally, catalyzes the isomerization of 5-dehydro-4-deoxy-D-glucuronate to 3-deoxy-D-glycero-2,5-hexodiulosonate. The sequence is that of 4-deoxy-L-threo-5-hexosulose-uronate ketol-isomerase 1 (kduI1) from Rhizobium meliloti (strain 1021) (Ensifer meliloti).